The sequence spans 467 residues: UDP-N-acetylmuramate--L-alanine ligase (467 aa).

ATP is bound at residue 114–120; that stretch reads GTHGKTT.

The protein belongs to the MurCDEF family.

The protein localises to the cytoplasm. It catalyses the reaction UDP-N-acetyl-alpha-D-muramate + L-alanine + ATP = UDP-N-acetyl-alpha-D-muramoyl-L-alanine + ADP + phosphate + H(+). It participates in cell wall biogenesis; peptidoglycan biosynthesis. Cell wall formation. This Nitrobacter hamburgensis (strain DSM 10229 / NCIMB 13809 / X14) protein is UDP-N-acetylmuramate--L-alanine ligase.